The primary structure comprises 199 residues: Outer-membrane lipoprotein LolB (199 aa).

The N-terminal stretch at 1–28 (MSVCPAPRSPVRWLHAFTLCLLLAVLAG) is a signal peptide. Residue Cys-29 is the site of N-palmitoyl cysteine attachment. Cys-29 is lipidated: S-diacylglycerol cysteine.

The protein belongs to the LolB family. In terms of assembly, monomer.

The protein localises to the cell outer membrane. Plays a critical role in the incorporation of lipoproteins in the outer membrane after they are released by the LolA protein. In Bordetella parapertussis (strain 12822 / ATCC BAA-587 / NCTC 13253), this protein is Outer-membrane lipoprotein LolB.